Consider the following 88-residue polypeptide: Probable small nuclear ribonucleoprotein F (88 aa).

Residues Asn7–Asp79 enclose the Sm domain.

The protein belongs to the snRNP Sm proteins family. SmF/LSm6 subfamily.

The protein resides in the nucleus. Probable common Sm protein, is found in U1 and U2 snRNPs and may be part of the spliceosome. The polypeptide is Probable small nuclear ribonucleoprotein F (Arabidopsis thaliana (Mouse-ear cress)).